An 814-amino-acid polypeptide reads, in one-letter code: Phosphatidylinositol 3-kinase VPS34 (814 aa).

In terms of domain architecture, C2 PI3K-type spans leucine 25–glycine 177. One can recognise a PIK helical domain in the interval aspartate 274–asparagine 449. Residues valine 532 to phenylalanine 799 form the PI3K/PI4K catalytic domain. The interval leucine 538–histidine 544 is G-loop. The interval glycine 668 to asparagine 676 is catalytic loop. The interval histidine 687–cysteine 708 is activation loop.

This sequence belongs to the PI3/PI4-kinase family. Interacts with VPS15. Component of a complex made of VPS38/USL1 and PI3K main subunits such as VPS15, ATG6/VPS30 and VPS34. Binds directly to VPS38/USL1.

It catalyses the reaction a 1,2-diacyl-sn-glycero-3-phospho-(1D-myo-inositol) + ATP = a 1,2-diacyl-sn-glycero-3-phospho-(1D-myo-inositol-3-phosphate) + ADP + H(+). The PI3K inhibitor LY294002 affects phosphatidylinositol 3-phosphate (PI3P) levels and triggers a decrease in proline, hydrophobic and aromatic amino acids, and sugars (e.g. raffinose) accumulation in response to salt treatment correlated with lower P5CS1 expression and higher ProDH1 expression, genes involved in proline biosynthesis and catabolism, respectively. Involved in the negative regulation of proline, hydrophobic and aromatic amino acids accumulation, especially in response to salt (NaCl), either through inhibition of their synthesis and/or promotion of their catabolism. Triggers defense responses (e.g. pathogenesis related (PR1 and PR5) gene expression and hydrogen peroxide H(2)O(2) burst) to the bacterial pathogen compatible Pseudomonas syringae pv tomato DC3000 (Pst DC3000) and incompatible Pst DC3000 (avrRpt2), by regulating reactive ogygen species (ROS) production and by promoting stomatal closure. This Arabidopsis thaliana (Mouse-ear cress) protein is Phosphatidylinositol 3-kinase VPS34.